Here is a 209-residue protein sequence, read N- to C-terminus: ATP-dependent Clp protease proteolytic subunit (209 aa).

Catalysis depends on Ser-106, which acts as the Nucleophile. Residue His-131 is part of the active site.

Belongs to the peptidase S14 family. As to quaternary structure, fourteen ClpP subunits assemble into 2 heptameric rings which stack back to back to give a disk-like structure with a central cavity, resembling the structure of eukaryotic proteasomes.

It localises to the cytoplasm. The catalysed reaction is Hydrolysis of proteins to small peptides in the presence of ATP and magnesium. alpha-casein is the usual test substrate. In the absence of ATP, only oligopeptides shorter than five residues are hydrolyzed (such as succinyl-Leu-Tyr-|-NHMec, and Leu-Tyr-Leu-|-Tyr-Trp, in which cleavage of the -Tyr-|-Leu- and -Tyr-|-Trp bonds also occurs).. Cleaves peptides in various proteins in a process that requires ATP hydrolysis. Has a chymotrypsin-like activity. Plays a major role in the degradation of misfolded proteins. The sequence is that of ATP-dependent Clp protease proteolytic subunit from Brucella canis (strain ATCC 23365 / NCTC 10854 / RM-666).